Reading from the N-terminus, the 72-residue chain is Sec-independent protein translocase protein TatA (72 aa).

A helical transmembrane segment spans residues 1–21 (MGSFSIWHWLIVLAVVLLLFG). The segment at 43-72 (MADEDAKEDPRTIDAKAEEPVKDVKKTTKS) is disordered. The segment covering 50-72 (EDPRTIDAKAEEPVKDVKKTTKS) has biased composition (basic and acidic residues).

The protein belongs to the TatA/E family. In terms of assembly, the Tat system comprises two distinct complexes: a TatABC complex, containing multiple copies of TatA, TatB and TatC subunits, and a separate TatA complex, containing only TatA subunits. Substrates initially bind to the TatABC complex, which probably triggers association of the separate TatA complex to form the active translocon.

The protein resides in the cell inner membrane. In terms of biological role, part of the twin-arginine translocation (Tat) system that transports large folded proteins containing a characteristic twin-arginine motif in their signal peptide across membranes. TatA could form the protein-conducting channel of the Tat system. This is Sec-independent protein translocase protein TatA from Brucella suis biovar 1 (strain 1330).